Here is a 73-residue protein sequence, read N- to C-terminus: Large ribosomal subunit protein bL31 (73 aa).

Residues 34-43 (KMNLDIDPKS) are compositionally biased toward basic and acidic residues. Positions 34–54 (KMNLDIDPKSHPAWTGGTQQM) are disordered.

This sequence belongs to the bacterial ribosomal protein bL31 family. Type A subfamily. In terms of assembly, part of the 50S ribosomal subunit.

Binds the 23S rRNA. This is Large ribosomal subunit protein bL31 from Rhodopseudomonas palustris (strain BisA53).